The chain runs to 635 residues: Sodium- and chloride-dependent creatine transporter 1 (635 aa).

A compositionally biased stretch (polar residues) spans 1-11; sequence MANKSTENGIY. A disordered region spans residues 1–27; the sequence is MANKSTENGIYSVSGEEKKGPLIAPGP. Over 1 to 60 the chain is Cytoplasmic; it reads MANKSTENGIYSVSGEEKKGPLIAPGPDGAPAKGDGPAALGAPGSLLAVPPRETWTRQMD. Residues 61–81 form a helical membrane-spanning segment; the sequence is FIMSCVGFAVGLGNVWRFPYL. At 82 to 87 the chain is on the extracellular side; sequence CYKNGG. A helical transmembrane segment spans residues 88–108; sequence GVFLIPYILIALIGGIPIFFL. The Cytoplasmic portion of the chain corresponds to 109-138; that stretch reads EISLGQFMKAGSINVWNICPLFKGLGYASM. The chain crosses the membrane as a helical span at residues 139 to 159; the sequence is VIVFYCNTYYIMVLAWGFYYL. Residues 160-230 are Extracellular-facing; the sequence is VKSFTTTLPW…LSEGLEVPGA (71 aa). 2 N-linked (GlcNAc...) asparagine glycosylation sites follow: Asn-192 and Asn-197. A helical transmembrane segment spans residues 231-251; sequence LNWEVTLCLLTCWVLVYFCVW. Topologically, residues 252 to 269 are cytoplasmic; that stretch reads KGVKSTGKIVYFTATFPY. A helical transmembrane segment spans residues 270–290; that stretch reads VVLVVLLVRGVLLPGALDGII. At 291–304 the chain is on the extracellular side; that stretch reads YYLKPDWSKLASPQ. Residues 305 to 325 traverse the membrane as a helical segment; the sequence is VWIDAGTQIFFSYAIGLGALT. Topologically, residues 326–341 are cytoplasmic; sequence ALGSYNRFNNNCYKDA. Residues 342-362 form a helical membrane-spanning segment; that stretch reads IILALINSGTSFFAGFVVFSI. Residues 363 to 394 lie on the Extracellular side of the membrane; that stretch reads LGFMATEQGVHISKVAESGPGLAFIAYPRAVT. Residues 395 to 415 form a helical membrane-spanning segment; it reads LMPVAPLWAALFFFMLLLLGL. Residues 416–444 lie on the Cytoplasmic side of the membrane; the sequence is DSQFVGVEGFITGLLDLLPASYYFRFQRE. Residues 445 to 465 traverse the membrane as a helical segment; that stretch reads ISVALCCTICFVIDLSMVTDG. Residues 466 to 479 are Extracellular-facing; it reads GMYVFQLFDYYSAS. The helical transmembrane segment at 480 to 500 threads the bilayer; it reads GTTLLWQAFWECVVVAWVYGA. The Cytoplasmic portion of the chain corresponds to 501–520; that stretch reads DRFMDDVACMIGYRPCPWMK. Residues 521 to 541 traverse the membrane as a helical segment; the sequence is WCWSFFTPLVCMGIFIFNVVY. Residues 542-560 lie on the Extracellular side of the membrane; the sequence is HEPLVYNNTYVYPWWGEAV. A glycan (N-linked (GlcNAc...) asparagine) is linked at Asn-548. The helical transmembrane segment at 561-581 threads the bilayer; that stretch reads GWAFALSSMLCVPLHLLGCLL. The Cytoplasmic portion of the chain corresponds to 582–635; that stretch reads RAKGTMAERWQHLTQPIWGLHHLEYRAQDSDVRGLTTLTPVSESSKVVVVESVM. Phosphothreonine is present on residues Thr-617 and Thr-620. Ser-623 is modified (phosphoserine).

The protein belongs to the sodium:neurotransmitter symporter (SNF) (TC 2.A.22) family. SLC6A8 subfamily. In terms of processing, glycosylated.

It is found in the cell membrane. The protein localises to the apical cell membrane. It catalyses the reaction creatine(out) + chloride(out) + 2 Na(+)(out) = creatine(in) + chloride(in) + 2 Na(+)(in). In terms of biological role, creatine:sodium symporter which mediates the uptake of creatine. Plays an important role in supplying creatine to the brain via the blood-brain barrier. This Bos taurus (Bovine) protein is Sodium- and chloride-dependent creatine transporter 1 (SLC6A8).